A 446-amino-acid chain; its full sequence is MRKLWAPNWLSRRQNANPTRDQSRHALMAWLAAALMSAGAAHAQLNVEITGVGSNQFPVATANFQGEAQAPQNLTAIIRSDLTNSGRFRNVDPAGATVAESAQVDLGSWKAKGADAFVAGSVTPTSNGQYEVRFRLYDTAKGQSLGGLAFTVTQGQLRVTAHKIADYIYEKLLGERGVFATRLSYVSKVGNRYQLLISDSDGQNAQIALTSTEPIISPAWSPDGRRVAYVSFEAKKPVVYVHDLATGKRVVVSNQKGNNSAPSWSPDGQHLAVSLSRDGNTQIYQVNADGSGLRRLTRSSAIDTEPQFSPDGRSIYFTSDRGGAPQIYRMPASGEESGAAQRVTFKGSYNVSPRISPDGKYLAYISRSGGFRLQLQDLSNGDVTSLTDTTNDESPSFAANGKYILYATRVGGRSVLAAVSTDGRTKQVLSLQSGAVREPSWGPFMQ.

The signal sequence occupies residues 1-43; it reads MRKLWAPNWLSRRQNANPTRDQSRHALMAWLAAALMSAGAAHA.

Belongs to the TolB family. In terms of assembly, the Tol-Pal system is composed of five core proteins: the inner membrane proteins TolA, TolQ and TolR, the periplasmic protein TolB and the outer membrane protein Pal. They form a network linking the inner and outer membranes and the peptidoglycan layer.

It localises to the periplasm. Functionally, part of the Tol-Pal system, which plays a role in outer membrane invagination during cell division and is important for maintaining outer membrane integrity. This is Tol-Pal system protein TolB from Cupriavidus metallidurans (strain ATCC 43123 / DSM 2839 / NBRC 102507 / CH34) (Ralstonia metallidurans).